The following is a 129-amino-acid chain: HTH-type transcriptional regulator DdrOP3 (129 aa).

The HTH cro/C1-type domain maps to 7-61; that stretch reads LRELRQERGLRLKDIAGAAQISVPYLSDLERGRTNPSLETLQSLASTYGITVHDL. The segment at residues 18 to 37 is a DNA-binding region (H-T-H motif); sequence LKDIAGAAQISVPYLSDLER.

Post-translationally, cleaved between Leu-106 and Arg-107 by the IrrE metalloprotease after exposure to radiation. Cleavage inactivates DdrOP3, leading to derepression of the target genes.

Repressor specific for genes preceded by a radiation/desiccation response motif (RDRM) site, which is present upstream of several radiation-induced genes. The sequence is that of HTH-type transcriptional regulator DdrOP3 from Deinococcus deserti (strain DSM 17065 / CIP 109153 / LMG 22923 / VCD115).